A 393-amino-acid polypeptide reads, in one-letter code: Probable acetyl-CoA acyltransferase (393 aa).

Cys88 serves as the catalytic Acyl-thioester intermediate. Active-site proton acceptor residues include His349 and Cys378.

It belongs to the thiolase-like superfamily. Thiolase family.

The protein resides in the cytoplasm. It catalyses the reaction 2 acetyl-CoA = acetoacetyl-CoA + CoA. The chain is Probable acetyl-CoA acyltransferase from Staphylococcus aureus (strain COL).